A 660-amino-acid chain; its full sequence is DNA topoisomerase I, plasmid (660 aa).

The 110-residue stretch at 1 to 110 (MKLMIIESPG…LRVTFNEITA (110 aa)) folds into the Toprim domain. The Mg(2+) site is built by E7 and D79. The region spanning 124-550 (DVKRVAAQEA…KVHDQLNMEL (427 aa)) is the Topo IA-type catalytic domain. The interaction with DNA stretch occupies residues 158–163 (SAGRVQ). The active-site O-(5'-phospho-DNA)-tyrosine intermediate is the Y287. 2 consecutive C4-type zinc fingers follow at residues 563-589 (CQEC…YPDC) and 613-643 (CVKC…KEGC).

This sequence belongs to the type IA topoisomerase family. Monomer. The cofactor is Mg(2+).

It catalyses the reaction ATP-independent breakage of single-stranded DNA, followed by passage and rejoining.. Functionally, releases the supercoiling and torsional tension of DNA, which is introduced during the DNA replication and transcription, by transiently cleaving and rejoining one strand of the DNA duplex. Introduces a single-strand break via transesterification at a target site in duplex DNA. The scissile phosphodiester is attacked by the catalytic tyrosine of the enzyme, resulting in the formation of a DNA-(5'-phosphotyrosyl)-enzyme intermediate and the expulsion of a 3'-OH DNA strand. The free DNA strand then undergoes passage around the unbroken strand, thus removing DNA supercoils. Finally, in the religation step, the DNA 3'-OH attacks the covalent intermediate to expel the active-site tyrosine and restore the DNA phosphodiester backbone. The chain is DNA topoisomerase I, plasmid from Xylella fastidiosa (strain 9a5c).